The primary structure comprises 425 residues: Serine--tRNA ligase (425 aa).

232–234 (TSE) contributes to the L-serine binding site. ATP is bound by residues 263–265 (RRE) and V279. An L-serine-binding site is contributed by E286. Residue 350–353 (EAVS) participates in ATP binding. T387 serves as a coordination point for L-serine.

It belongs to the class-II aminoacyl-tRNA synthetase family. Type-1 seryl-tRNA synthetase subfamily. In terms of assembly, homodimer. The tRNA molecule binds across the dimer.

It is found in the cytoplasm. The enzyme catalyses tRNA(Ser) + L-serine + ATP = L-seryl-tRNA(Ser) + AMP + diphosphate + H(+). It catalyses the reaction tRNA(Sec) + L-serine + ATP = L-seryl-tRNA(Sec) + AMP + diphosphate + H(+). The protein operates within aminoacyl-tRNA biosynthesis; selenocysteinyl-tRNA(Sec) biosynthesis; L-seryl-tRNA(Sec) from L-serine and tRNA(Sec): step 1/1. Its function is as follows. Catalyzes the attachment of serine to tRNA(Ser). Is also able to aminoacylate tRNA(Sec) with serine, to form the misacylated tRNA L-seryl-tRNA(Sec), which will be further converted into selenocysteinyl-tRNA(Sec). This is Serine--tRNA ligase from Methanoculleus marisnigri (strain ATCC 35101 / DSM 1498 / JR1).